The chain runs to 197 residues: MTSGAGWEEQVFLPITNSISSEDNNQIKIGSSVSIEYNQNGQHVSQIDDKGLHNILVLTGYAIDESTGELVPTFDPCDYVKGILISGKILKGNHFKIIGIPSNKLYIIRKKDVHGNITFSLPIKNFNTGTYQVDLRDKVTSFVSLDRDVAKTIVDNVLAKIYAKIYNSLNKEQKDKLYRDVEEIFNYYSIKSLKSNP.

The protein belongs to the CRISPR system Cmr7 family. As to quaternary structure, possible homodimer. Part of the CMR ribonucleoprotein complex, consisting of crRNA plus Cmr1/Cmr2/Cmr3/Cmr4/Cmr5/Cmr6 at 1:1 and possibly 3 Cmr7 dimers. A Cmr2/Cmr3/Cmr7 subcomplex without crRNA can also be isolated. It does not cleave target RNA.

It localises to the cytoplasm. In terms of biological role, CRISPR (clustered regularly interspaced short palindromic repeat) is an adaptive immune system that provides protection against mobile genetic elements (viruses, transposable elements and conjugative plasmids). CRISPR clusters contain spacers, sequences complementary to antecedent mobile elements, and target invading nucleic acids. CRISPR clusters are transcribed and processed into CRISPR RNA (crRNA). The CMR complex degrades RNA complementary to the crRNA (target RNA) within UA dinucleotides, generating 3'-OH and 5'-phosphate ends. Activity is dependent on the 8 nt long 5' tag in the crRNA, an unpaired 3' flag on the target RNA, and is stimulated by ATP. Some cleavage of the guide crRNA can also be observed. The polypeptide is CRISPR system CMR subunit Cmr7 1 (cmr7A) (Saccharolobus solfataricus (strain ATCC 35092 / DSM 1617 / JCM 11322 / P2) (Sulfolobus solfataricus)).